We begin with the raw amino-acid sequence, 264 residues long: Apolipoprotein A-I (264 aa).

The first 18 residues, 1–18 (MKAVVLALAVLFLTGSQA), serve as a signal peptide directing secretion. 2 tandem repeats follow at residues 67-88 (LHLL…EQLG) and 89-110 (PVTH…QEMN). A 10 X approximate tandem repeats region spans residues 67 to 264 (LHLLDNWDTL…DEASKKLNAQ (198 aa)). Met-109 carries the post-translational modification Methionine sulfoxide. One copy of the 3; half-length repeat lies at 111 to 121 (KDLEEVKVKVQ). Repeat copies occupy residues 122–143 (PYLD…EKVG), 144–165 (PLGA…EKLT), 166–187 (PLGE…TQLA), 188–207 (PYSD…IRDS), and 208–229 (PSLA…EKAK). A 9; half-length repeat occupies 230 to 240 (PALEDLRQGLM). The stretch at 241–264 (PVLENLKTTVLAAIDEASKKLNAQ) is repeat 10.

The protein belongs to the apolipoprotein A1/A4/E family. Homodimer. Interacts with APOA1BP and CLU. Component of a sperm activating protein complex (SPAP), consisting of APOA1, an immunoglobulin heavy chain, an immunoglobulin light chain and albumin. Interacts with NDRG1. Interacts with SCGB3A2. Interacts with NAXE and YJEFN3. Post-translationally, glycosylated. Palmitoylated. In terms of processing, phosphorylation sites are present in the extracellular medium.

It is found in the secreted. Participates in the reverse transport of cholesterol from tissues to the liver for excretion by promoting cholesterol efflux from tissues and by acting as a cofactor for the lecithin cholesterol acyltransferase (LCAT). As part of the SPAP complex, activates spermatozoa motility. In Jaculus jaculus (Lesser Egyptian jerboa), this protein is Apolipoprotein A-I (APOA1).